We begin with the raw amino-acid sequence, 159 residues long: Ubiquitin-like protein ATG12 (159 aa).

The interval 1–40 (MASPQPPFGGGSNSNSNTASPSNNLSPTASPLLEGRDSPN) is disordered. The segment covering 13 to 27 (NSNSNTASPSNNLSP) has biased composition (low complexity). Residue Gly159 forms a Glycyl lysine isopeptide (Gly-Lys) (interchain with K-218 in ATG5) linkage.

It belongs to the ATG12 family. In terms of assembly, forms a conjugate with ATG5. Forms a thioester bond with the 'Cys-116' of ATG10. Interacts with the ATG7 C-terminal 40 amino acids domain. The ATG12-ATG5 conjugate forms a complex with several units of ATG16. The ATG12-ATG5 conjugate also associates with ATG3.

It is found in the preautophagosomal structure membrane. It localises to the cytoplasm. Its function is as follows. Ubiquitin-like protein involved in cytoplasm to vacuole transport (Cvt), autophagy vesicles formation, mitophagy, and nucleophagy. Conjugation with ATG5 through a ubiquitin-like conjugating system involving also ATG7 as an E1-like activating enzyme and ATG10 as an E2-like conjugating enzyme, is essential for its function. The ATG12-ATG5 conjugate acts as an E3-like enzyme which is required for lipidation of ATG8 and ATG8 association to the vesicle membranes. ATG12-ATG5 rearranges the ATG3 catalytic center and enhances its E2 activity. Plays a role in sexual development and perithecia formation. The sequence is that of Ubiquitin-like protein ATG12 from Sordaria macrospora (strain ATCC MYA-333 / DSM 997 / K(L3346) / K-hell).